Here is a 213-residue protein sequence, read N- to C-terminus: ATP phosphoribosyltransferase (213 aa).

It belongs to the ATP phosphoribosyltransferase family. Short subfamily. As to quaternary structure, heteromultimer composed of HisG and HisZ subunits.

It is found in the cytoplasm. It catalyses the reaction 1-(5-phospho-beta-D-ribosyl)-ATP + diphosphate = 5-phospho-alpha-D-ribose 1-diphosphate + ATP. It functions in the pathway amino-acid biosynthesis; L-histidine biosynthesis; L-histidine from 5-phospho-alpha-D-ribose 1-diphosphate: step 1/9. Catalyzes the condensation of ATP and 5-phosphoribose 1-diphosphate to form N'-(5'-phosphoribosyl)-ATP (PR-ATP). Has a crucial role in the pathway because the rate of histidine biosynthesis seems to be controlled primarily by regulation of HisG enzymatic activity. The sequence is that of ATP phosphoribosyltransferase from Variovorax paradoxus (strain S110).